The following is a 637-amino-acid chain: 1-deoxy-D-xylulose-5-phosphate synthase (637 aa).

Thiamine diphosphate-binding positions include histidine 71 and 112 to 114 (SHA). Aspartate 144 provides a ligand contact to Mg(2+). Residues 145 to 146 (GA), asparagine 173, tyrosine 284, and glutamate 365 contribute to the thiamine diphosphate site. Residue asparagine 173 participates in Mg(2+) binding.

The protein belongs to the transketolase family. DXPS subfamily. In terms of assembly, homodimer. Requires Mg(2+) as cofactor. Thiamine diphosphate serves as cofactor.

It carries out the reaction D-glyceraldehyde 3-phosphate + pyruvate + H(+) = 1-deoxy-D-xylulose 5-phosphate + CO2. It participates in metabolic intermediate biosynthesis; 1-deoxy-D-xylulose 5-phosphate biosynthesis; 1-deoxy-D-xylulose 5-phosphate from D-glyceraldehyde 3-phosphate and pyruvate: step 1/1. Catalyzes the acyloin condensation reaction between C atoms 2 and 3 of pyruvate and glyceraldehyde 3-phosphate to yield 1-deoxy-D-xylulose-5-phosphate (DXP). This chain is 1-deoxy-D-xylulose-5-phosphate synthase, found in Mycolicibacterium gilvum (strain PYR-GCK) (Mycobacterium gilvum (strain PYR-GCK)).